The primary structure comprises 1259 residues: Trafficking protein particle complex subunit 10 (1259 aa).

Phosphoserine is present on Ser708. Residues 1189–1222 form a disordered region; sequence LSVDKHGDDQPDSSSLKSRGSVHSACSSEHKGLP.

It belongs to the TRAPPC10 family. Specific component of the multisubunit TRAPP II complex, which includes at least TRAPPC1, TRAPPC2, TRAPPC3, TRAPPC4, TRAPPC5, TRAPPC6A/B, TRAPPC9, TRAPPC10 and TRAPPC14. TRAPPC9, TRAPPC10 and TRAPPC14 are specific subunits of the TRAPP II complex. Interacts with TRAPPC14. In terms of tissue distribution, expressed in all tissues examined.

The protein localises to the golgi apparatus. It is found in the cis-Golgi network. In terms of biological role, specific subunit of the TRAPP (transport protein particle) II complex, a highly conserved vesicle tethering complex that functions in late Golgi trafficking as a membrane tether. The chain is Trafficking protein particle complex subunit 10 (TRAPPC10) from Homo sapiens (Human).